Reading from the N-terminus, the 888-residue chain is Extra-large guanine nucleotide-binding protein 1 (888 aa).

The tract at residues 98-119 is disordered; the sequence is SVIEHTEEEEEEEGGDGEDCEL. Acidic residues predominate over residues 103-118; sequence TEEEEEEEGGDGEDCE. Positions 205 to 222 match the Nuclear localization signal motif; sequence RRVRVVPVKKQPQTKGKK. Residues 225-268 form an RING-type; degenerate zinc finger; it reads CYRCFKGSRFTEKEVCLVCDAKYCNSCVLRAMGSMPEGRKCVTC. The region spanning 482–879 is the G-alpha domain; the sequence is TLQKILLVGN…NICMSEYSMY (398 aa). Residues 485-498 form a G1 motif region; sequence KILLVGNSGSGTST. GTP-binding positions include 490 to 498 and 661 to 669; these read GNSGSGTST and DILYAEGVT. Ca(2+) is bound by residues Ser497 and Thr669. The G2 motif stretch occupies residues 661–669; that stretch reads DILYAEGVT. Residues 702–711 form a G3 motif region; the sequence is YQLIRVPSRG. Positions 770–777 are G4 motif; that stretch reads LLILNKYD. Residue 774–777 participates in GTP binding; it reads NKYD. The interval 843–848 is G5 motif; the sequence is SKSLDP.

The protein belongs to the G-alpha family. XLG subfamily. Requires Ca(2+) as cofactor. As to expression, ubiquitous. Strongly expressed in vascular tissues, root and shoot meristems and lateral root primordia.

The protein localises to the nucleus. Guanine nucleotide-binding proteins (G proteins) are involved as modulators or transducers in various transmembrane signaling systems. Binds GTP with specificity. Plays a role in the root morphogenesis by regulation of the cell proliferation. This chain is Extra-large guanine nucleotide-binding protein 1 (XLG1), found in Arabidopsis thaliana (Mouse-ear cress).